The chain runs to 423 residues: MDRAIDIDFRTISVVGLGYIGLPTATVLASRQREVIGVDINQHAVDTINQGRIHIVEPDLDMLVRAAVSQGYLRATTEPEPADAFLIAVPTPFLDNKQPDLSYIEAAARAIAPVLKRGDLVVLESTSPVGATEQLSDWLSAQRPDLSFPHQQGEESDIRVAHCPERVLPGHVLRELVENDRIIGGMTPKCSEAAQRLYELFVRGRCIVTDARTAEMCKLTENAFRDVNIAFANELSMICDEIGVNVWELISVANRHPRVNILQPGPGVGGHCIAVDPWFIVDAAPESARLIRTAREVNDAKPHYVLDRVKQAARRFKEPVIACFGLSFKANIDDLRESPAIEIVQTMVQQQLGTVLVVEPHIKVLPAALQGVELLNAEAALSRADIVVLLVDHQQFRKLDTDRLQSRVVIDTRGMWSAKRIAA.

11-28 (TISVVGLGYIGLPTATVL) provides a ligand contact to NAD(+). The active-site Proton donor/acceptor is the Lys-218. Cys-272 functions as the Nucleophile in the catalytic mechanism.

Belongs to the UDP-glucose/GDP-mannose dehydrogenase family.

Probably involved in the synthesis of sugar components of EPS I, by converting NDP-N-acetyl-D-galactosamine into NDP-N-acetyl-D-galactosaminuronic acid. This Ralstonia nicotianae (strain ATCC BAA-1114 / GMI1000) (Ralstonia solanacearum) protein is NDP-N-acetyl-D-galactosaminuronic acid dehydrogenase (epsD).